A 360-amino-acid chain; its full sequence is Phospho-N-acetylmuramoyl-pentapeptide-transferase (360 aa).

Helical transmembrane passes span 26–46, 70–90, 97–117, 134–154, 167–187, 199–219, 236–256, 263–283, 288–308, and 338–358; these read AILG…WVIN, GTPT…TLLW, YVLA…VDDY, YFWQ…TAQI, GVAL…VVGF, GLAI…AYLV, AGEL…FLWF, VFMG…IAVI, IVFI…ILQV, and VIVR…ATLK.

The protein belongs to the glycosyltransferase 4 family. MraY subfamily. Mg(2+) serves as cofactor.

Its subcellular location is the cell inner membrane. It carries out the reaction UDP-N-acetyl-alpha-D-muramoyl-L-alanyl-gamma-D-glutamyl-meso-2,6-diaminopimeloyl-D-alanyl-D-alanine + di-trans,octa-cis-undecaprenyl phosphate = di-trans,octa-cis-undecaprenyl diphospho-N-acetyl-alpha-D-muramoyl-L-alanyl-D-glutamyl-meso-2,6-diaminopimeloyl-D-alanyl-D-alanine + UMP. It functions in the pathway cell wall biogenesis; peptidoglycan biosynthesis. Functionally, catalyzes the initial step of the lipid cycle reactions in the biosynthesis of the cell wall peptidoglycan: transfers peptidoglycan precursor phospho-MurNAc-pentapeptide from UDP-MurNAc-pentapeptide onto the lipid carrier undecaprenyl phosphate, yielding undecaprenyl-pyrophosphoryl-MurNAc-pentapeptide, known as lipid I. This is Phospho-N-acetylmuramoyl-pentapeptide-transferase from Saccharophagus degradans (strain 2-40 / ATCC 43961 / DSM 17024).